Consider the following 1177-residue polypeptide: Tyrosine-protein kinase hopscotch (1177 aa).

The disordered stretch occupies residues 1–41 (MALANGGEDRMDDSSSGRTSLADSASLTNSSLRSGTSSQSI). A compositionally biased stretch (polar residues) spans 16-41 (SGRTSLADSASLTNSSLRSGTSSQSI). A phosphoserine mark is found at S40 and S321. Residues 46–414 (GTIRVFNFTT…IYIRLSSKWM (369 aa)) form the FERM domain. The SH2; atypical domain maps to 433 to 539 (HCHGPIGGAY…YRIPASKYDK (107 aa)). 2 Protein kinase domains span residues 582 to 843 (YPDS…AEIL) and 892 to 1164 (YNME…HPTD). Residues 898-906 (IGRGHYGTV) and K926 each bind ATP. The active-site Proton acceptor is the D1014. Phosphotyrosine; by autocatalysis is present on residues Y1047 and Y1048. Positions 1158–1177 (KVTHPTDGHQSPPNQPTDAE) are disordered.

It belongs to the protein kinase superfamily. Tyr protein kinase family. JAK subfamily. As to quaternary structure, forms a complex with Hsp83 and piwi; probably Hop mediates the interaction between piwi and Hsp83.

The protein resides in the endomembrane system. It carries out the reaction L-tyrosyl-[protein] + ATP = O-phospho-L-tyrosyl-[protein] + ADP + H(+). In terms of biological role, tyrosine kinase of the non-receptor type, phosphorylates the marelle protein. Required maternally for the establishment of the normal array of embryonic segments: involved in the control of pair-rule gene transcription in a stripe-specific manner. Together with Hsp83 and piwi, mediates canalization, also known as developmental robustness, likely via epigenetic silencing of existing genetic variants and suppression of transposon-induced new genetic variation. In Drosophila melanogaster (Fruit fly), this protein is Tyrosine-protein kinase hopscotch (hop).